The primary structure comprises 321 residues: Ribose-phosphate pyrophosphokinase 2 (321 aa).

Residues aspartate 130, histidine 132, and aspartate 145 each contribute to the Mg(2+) site. Serine 172 carries the phosphoserine modification.

Belongs to the ribose-phosphate pyrophosphokinase family.

It is found in the cytoplasm. It carries out the reaction D-ribose 5-phosphate + ATP = 5-phospho-alpha-D-ribose 1-diphosphate + AMP + H(+). Its pathway is metabolic intermediate biosynthesis; 5-phospho-alpha-D-ribose 1-diphosphate biosynthesis; 5-phospho-alpha-D-ribose 1-diphosphate from D-ribose 5-phosphate (route I): step 1/1. Functionally, 5-phosphoribose 1-diphosphate synthase involved in nucleotide, histidine, and tryptophan biosynthesis. Active in heteromultimeric complexes with other 5-phosphoribose 1-diphosphate synthases. The sequence is that of Ribose-phosphate pyrophosphokinase 2 from Schizosaccharomyces pombe (strain 972 / ATCC 24843) (Fission yeast).